The chain runs to 562 residues: SPI-1 type 3 secretion system secretin (562 aa).

The N-terminal stretch at 1 to 24 (MKTHILLARVLACAALVLVTPGYS) is a signal peptide.

The protein belongs to the bacterial secretin family. T3SS SctC subfamily. As to quaternary structure, the core secretion machinery of the T3SS is composed of approximately 20 different proteins, including cytoplasmic components, a base, an export apparatus and a needle. This subunit is part of the base, which anchors the injectisome in the bacterial cell envelope. Forms a stable homooligomeric complex. The complex is composed of 15 subunits.

The protein localises to the cell outer membrane. Functionally, component of the type III secretion system (T3SS), also called injectisome, which is used to inject bacterial effector proteins into eukaryotic host cells. Forms a ring-shaped multimeric structure with an apparent central pore in the outer membrane. This chain is SPI-1 type 3 secretion system secretin, found in Salmonella typhimurium (strain LT2 / SGSC1412 / ATCC 700720).